A 72-amino-acid chain; its full sequence is Toxin Cll8 (72 aa).

Positions 1-4 (TVSA) are cleaved as a signal peptide. The LCN-type CS-alpha/beta domain occupies 5–70 (KEGYLVKKSN…TWPLPNKSCG (66 aa)). 4 cysteine pairs are disulfide-bonded: cysteine 16–cysteine 69, cysteine 20–cysteine 45, cysteine 29–cysteine 50, and cysteine 33–cysteine 52. Cysteine amide is present on cysteine 69.

This sequence belongs to the long (4 C-C) scorpion toxin superfamily. Sodium channel inhibitor family. Beta subfamily. In terms of tissue distribution, expressed by the venom gland.

The protein resides in the secreted. In terms of biological role, beta toxins bind voltage-independently at site-4 of sodium channels (Nav) and shift the voltage of activation toward more negative potentials thereby affecting sodium channel activation and promoting spontaneous and repetitive firing. The protein is Toxin Cll8 of Centruroides limpidus (Mexican scorpion).